The sequence spans 614 residues: Deoxynucleoside triphosphate triphosphohydrolase SAMHD1 (614 aa).

Residues 1-13 (MGSPAAGWGAAPA) are compositionally biased toward low complexity. A disordered region spans residues 1–33 (MGSPAAGWGAAPAKRARREGSAESSCGSPADRD). An SAM domain is found at 37 to 102 (WDTERLCQHL…LACLNQLRQT (66 aa)). Positions 107 and 108 each coordinate GTP. Residue Asn110 coordinates dGTP. Asp128, Gln133, and Arg136 together coordinate GTP. DGTP-binding residues include Gln140, Leu141, Val147, and Arg155. DATP is bound at residue Gln140. Position 140 (Gln140) interacts with dCTP. DTTP is bound at residue Gln140. Residue Arg155 coordinates dATP. Arg155 contributes to the dCTP binding site. Arg155 lines the dTTP pocket. Positions 155 to 307 (RFEHSLGVGY…GIDVDKWDYF (153 aa)) constitute an HD domain. The Mn(2+) site is built by His158, His197, and Asp198. Residues His201 and His206 each contribute to the dATP site. DCTP is bound by residues His201 and His206. DTTP is bound by residues His201 and His206. His224 is an active-site residue. Residue Asp302 coordinates Mn(2+). Residues Lys303, Tyr306, Asp310, Arg324, Arg343, Lys345, Asn349, Arg357, Tyr365, Gln366, His367, and Lys368 each coordinate dGTP. Residues Lys303, Tyr306, and Asp310 each coordinate dATP. DCTP is bound by residues Lys303, Tyr306, and Asp310. DTTP is bound by residues Lys303, Tyr306, and Asp310. Arg357 contributes to the dATP binding site. Residue Arg357 participates in dCTP binding. Residue Gln366 participates in dATP binding. Position 366 (Gln366) interacts with dCTP. Residue Gln366 coordinates dTTP. Residues Arg442, Lys446, and Lys515 each coordinate GTP. DGTP is bound at residue Lys515.

The protein belongs to the SAMHD1 family. In terms of assembly, homodimer; in absence of GTP and dNTP. Homotetramer; in GTP- and dNTP-bound form. Interacts with rbbp8/CtIP. Zn(2+) serves as cofactor.

The protein resides in the nucleus. It localises to the chromosome. It carries out the reaction a 2'-deoxyribonucleoside 5'-triphosphate + H2O = a 2'-deoxyribonucleoside + triphosphate + H(+). The enzyme catalyses dATP + H2O = 2'-deoxyadenosine + triphosphate + H(+). It catalyses the reaction dCTP + H2O = 2'-deoxycytidine + triphosphate + H(+). The catalysed reaction is dGTP + H2O = 2'-deoxyguanosine + triphosphate + H(+). It carries out the reaction dTTP + H2O = thymidine + triphosphate + H(+). Its activity is regulated as follows. Allosterically activated and regulated via the combined actions of GTP and dNTPs (dATP, dGTP, dTTP and dCTP): Allosteric site 1 binds GTP, while allosteric site 2 binds dNTP. Allosteric activation promotes the formation of highly active homotetramers. In terms of biological role, protein that acts both as a host restriction factor involved in defense response to virus and as a regulator of DNA end resection at stalled replication forks. Has deoxynucleoside triphosphate (dNTPase) activity, which is required to restrict infection by viruses: dNTPase activity reduces cellular dNTP levels to levels too low for retroviral reverse transcription to occur, blocking early-stage virus replication in dendritic and other myeloid cells. Functions during S phase at stalled DNA replication forks to promote the resection of gapped or reversed forks: acts by stimulating the exonuclease activity of MRE11, activating the ATR-CHK1 pathway and allowing the forks to restart replication. Its ability to promote degradation of nascent DNA at stalled replication forks is required to prevent induction of type I interferons, thereby preventing chronic inflammation. Ability to promote DNA end resection at stalled replication forks is independent of dNTPase activity. This is Deoxynucleoside triphosphate triphosphohydrolase SAMHD1 from Gallus gallus (Chicken).